The sequence spans 103 residues: Large ribosomal subunit protein bL21 (103 aa).

The protein belongs to the bacterial ribosomal protein bL21 family. As to quaternary structure, part of the 50S ribosomal subunit. Contacts protein L20.

Its function is as follows. This protein binds to 23S rRNA in the presence of protein L20. The chain is Large ribosomal subunit protein bL21 from Paracidovorax citrulli (strain AAC00-1) (Acidovorax citrulli).